A 440-amino-acid polypeptide reads, in one-letter code: MKRLARSLYLQVLLAVVLGALVGHLFPATGASLKPLGDGFIKLVKMLIAPIVFATVVTGIAKMGDLRKVGRVGLKGLLYFEVLTTVALAIGLVVARLARPGAGMNVDPATLDTKAIASYTNGAQAHGTVDFLMNVIPRDVADAFARGDILQVLLFSVLFGAALAALKDKGRPVLEFVDGLSLVLFRIVGFVMRLAPVGAFGAMAFTVGKYGIATLLSLGKLIACFYATSALFVVLMLGLVLRWCGLSLFRFLRYIKEEIFVVLGTSSSESALPLMMRKMEKLGCSKPVVGLVVPMGYSFNLDGTSIYLTLATLFIAQATNTHVTLVQELEILAVLLLTSKGAAAVTGGGFITLAATLSAVGNIPVAGLALLLGVDRFMSEARAITNLIGNGVASVAVSRWEGELDQARARAVLAGTVPDEVEPANDPEPPAMAAGLGLHG.

8 helical membrane-spanning segments follow: residues 8 to 28, 40 to 60, 74 to 94, 147 to 167, 187 to 207, 221 to 241, 288 to 308, and 354 to 374; these read LYLQ…LFPA, FIKL…VTGI, LKGL…GLVV, GDIL…AALK, IVGF…AFTV, LIAC…GLVL, VVGL…SIYL, and AATL…LLGV. Residues 419 to 440 form a disordered region; sequence DEVEPANDPEPPAMAAGLGLHG.

The protein belongs to the dicarboxylate/amino acid:cation symporter (DAACS) (TC 2.A.23) family.

Its subcellular location is the cell inner membrane. Functionally, responsible for the transport of dicarboxylates such as succinate, fumarate, and malate from the periplasm across the membrane. The protein is C4-dicarboxylate transport protein of Anaeromyxobacter dehalogenans (strain 2CP-C).